The following is a 259-amino-acid chain: Thrombin-like enzyme gyroxin B1.7 (259 aa).

Residues 1 to 18 (MVLIRVLANLLILQLSYA) form the signal peptide. Positions 19–259 (QKSSELVIGG…AGNTAVTCPP (241 aa)) are excised as a propeptide. The 226-residue stretch at 25–250 (VIGGDECNIN…DTEWIQSIIA (226 aa)) folds into the Peptidase S1 domain. 5 disulfides stabilise this stretch: Cys31–Cys162, Cys49–Cys65, Cys141–Cys211, Cys173–Cys190, and Cys201–Cys226. The Charge relay system role is filled by His64. Asn102 is a glycosylation site (N-linked (GlcNAc...) asparagine). The Charge relay system role is filled by Asp109. The Charge relay system role is filled by Ser205.

This sequence belongs to the peptidase S1 family. Snake venom subfamily. Monomer. In terms of tissue distribution, expressed by the venom gland.

It is found in the secreted. Thrombin-like snake venom serine protease. Displays a specificity similar to trypsin. Releases only fibrinopeptide A in the conversion of fibrinogen to fibrin. Shows coagulant, esterase and amidase activities. Reversibly increases the permeability of the blood brain barrier (BBB) in mice. Induces the barrel rotation syndrome in mice, which is manifested by gyroxin-like, rapid rolling motions. This syndrome may be due to its effect on BBB permeability, and certainly also to other actions affecting endogenous substrates present in the endothelium, nervous tissues or blood. This is Thrombin-like enzyme gyroxin B1.7 from Crotalus durissus terrificus (South American rattlesnake).